Reading from the N-terminus, the 269-residue chain is Indole-3-glycerol phosphate synthase 1 (269 aa).

It belongs to the TrpC family.

It catalyses the reaction 1-(2-carboxyphenylamino)-1-deoxy-D-ribulose 5-phosphate + H(+) = (1S,2R)-1-C-(indol-3-yl)glycerol 3-phosphate + CO2 + H2O. Its pathway is amino-acid biosynthesis; L-tryptophan biosynthesis; L-tryptophan from chorismate: step 4/5. The protein is Indole-3-glycerol phosphate synthase 1 (trpC1) of Streptomyces coelicolor (strain ATCC BAA-471 / A3(2) / M145).